Here is a 162-residue protein sequence, read N- to C-terminus: F protein (162 aa).

Residues 1-23 form a disordered region; it reads MSTNPKPQKKKTNVTPTVAHRTS. Positions 13–23 are enriched in polar residues; the sequence is NVTPTVAHRTS.

The protein resides in the host cytoplasm. Its subcellular location is the host perinuclear region. The chain is F protein from Hepatitis C virus genotype 1a (isolate 1) (HCV).